A 543-amino-acid polypeptide reads, in one-letter code: Glutamyl-tRNA(Gln) amidotransferase subunit B-1, chloroplastic/mitochondrial (543 aa).

Residues methionine 1 to threonine 47 form a disordered region. Over residues arginine 12 to arginine 23 the composition is skewed to basic residues.

This sequence belongs to the GatB/GatE family. GatB subfamily. In terms of assembly, subunit of the heterotrimeric GatCAB amidotransferase (AdT) complex, composed of A, B and C subunits.

Its subcellular location is the mitochondrion. The protein resides in the plastid. It is found in the chloroplast. It catalyses the reaction L-glutamyl-tRNA(Gln) + L-glutamine + ATP + H2O = L-glutaminyl-tRNA(Gln) + L-glutamate + ADP + phosphate + H(+). Its function is as follows. Allows the formation of correctly charged Gln-tRNA(Gln) through the transamidation of misacylated Glu-tRNA(Gln) in chloroplasts and mitochondria. The reaction takes place in the presence of glutamine and ATP through an activated gamma-phospho-Glu-tRNA(Gln). In Micromonas commoda (strain RCC299 / NOUM17 / CCMP2709) (Picoplanktonic green alga), this protein is Glutamyl-tRNA(Gln) amidotransferase subunit B-1, chloroplastic/mitochondrial.